Reading from the N-terminus, the 306-residue chain is Ectoine dioxygenase (306 aa).

L-ectoine is bound at residue Gln127. Lys133 serves as a coordination point for 2-oxoglutarate. Fe cation contacts are provided by His144, Asp146, and His245.

The protein belongs to the PhyH family. EctD subfamily. Homodimer. Fe(2+) is required as a cofactor.

The enzyme catalyses L-ectoine + 2-oxoglutarate + O2 = 5-hydroxyectoine + succinate + CO2. In terms of biological role, involved in the biosynthesis of 5-hydroxyectoine, called compatible solute, which helps organisms to survive extreme osmotic stress by acting as a highly soluble organic osmolyte. Catalyzes the 2-oxoglutarate-dependent selective hydroxylation of L-ectoine to yield (4S,5S)-5-hydroxyectoine. The polypeptide is Ectoine dioxygenase (Sphingopyxis alaskensis (strain DSM 13593 / LMG 18877 / RB2256) (Sphingomonas alaskensis)).